A 231-amino-acid polypeptide reads, in one-letter code: Large ribosomal subunit protein uL1 (231 aa).

This sequence belongs to the universal ribosomal protein uL1 family. Part of the 50S ribosomal subunit.

Its function is as follows. Binds directly to 23S rRNA. The L1 stalk is quite mobile in the ribosome, and is involved in E site tRNA release. Protein L1 is also a translational repressor protein, it controls the translation of the L11 operon by binding to its mRNA. This Macrococcus caseolyticus (strain JCSC5402) (Macrococcoides caseolyticum) protein is Large ribosomal subunit protein uL1.